The chain runs to 185 residues: MVMMSKQLTAQAPVDPIVLGKMGSSYGIRGWLRVFSSTEDAESIFDYQPWFIQKAGQWQQVQLESWKHHNQDMIIKLKGVDDRDAANLLTNCEIVVDSSQLPQLEEGDYYWKDLMGCQVVTTEGYDLGKVVDMMETGSNDVLVIKANLKDAFGIKERLVPFLDGQVIKKVDLTTRSIEVDWDPGF.

The PRC barrel domain occupies 106–185 (EGDYYWKDLM…SIEVDWDPGF (80 aa)).

The protein belongs to the RimM family. Binds ribosomal protein uS19.

It localises to the cytoplasm. An accessory protein needed during the final step in the assembly of 30S ribosomal subunit, possibly for assembly of the head region. Essential for efficient processing of 16S rRNA. May be needed both before and after RbfA during the maturation of 16S rRNA. It has affinity for free ribosomal 30S subunits but not for 70S ribosomes. This chain is Ribosome maturation factor RimM, found in Shigella dysenteriae serotype 1 (strain Sd197).